We begin with the raw amino-acid sequence, 664 residues long: Tripartite terminase subunit 1 (664 aa).

A C3H1-type zinc finger spans residues 205 to 233 (CHVCFEELCVTANQGATASRRLAGKICDH). Disordered stretches follow at residues 273–295 (SKMT…AQER) and 440–466 (HAAE…GGPE). Positions 281–292 (GGPAEAPGPAAA) are enriched in low complexity.

This sequence belongs to the herpesviridae TRM1 protein family. In terms of assembly, associates with TRM2 and TRM3 to form the tripartite terminase complex. Interacts with portal protein.

The protein localises to the host nucleus. In terms of biological role, component of the molecular motor that translocates viral genomic DNA in empty capsid during DNA packaging. Forms a tripartite terminase complex together with TRM2 and TRM3 in the host cytoplasm. Once the complex reaches the host nucleus, it interacts with the capsid portal vertex. This portal forms a ring in which genomic DNA is translocated into the capsid. TRM1 carries an endonuclease activity that plays an important role for the cleavage of concatemeric viral DNA into unit length genomes. This Bos taurus (Bovine) protein is Tripartite terminase subunit 1.